The sequence spans 184 residues: Small ribosomal subunit protein eS8 (184 aa).

The disordered stretch occupies residues 1 to 23 (MGISRDSRHKRRLTGGRYPVHKK). The span at 7–23 (SRHKRRLTGGRYPVHKK) shows a compositional bias: basic residues.

It belongs to the eukaryotic ribosomal protein eS8 family.

The sequence is that of Small ribosomal subunit protein eS8 (RPS8) from Theileria annulata.